The following is a 345-amino-acid chain: Annexin A9 (345 aa).

Annexin repeat units lie at residues 41–112 (FSVD…ALLQ), 113–184 (PAAQ…ALSK), 197–266 (NLEE…SLAS), and 270–341 (NTAL…ALCR).

This sequence belongs to the annexin family. Homodimer.

Functionally, may act as a low affinity receptor for acetylcholine. This is Annexin A9 (Anxa9) from Mus musculus (Mouse).